The primary structure comprises 796 residues: Protein translocase subunit SecA 2 (796 aa).

Residues glutamine 84, 102–106 (GEGKT), and aspartate 496 each bind ATP.

The protein belongs to the SecA family. As to quaternary structure, monomer and homodimer. Part of the essential Sec protein translocation apparatus which comprises SecA, SecYEG and auxiliary proteins SecDF. Other proteins may also be involved.

The protein localises to the cell membrane. The protein resides in the cytoplasm. The enzyme catalyses ATP + H2O + cellular proteinSide 1 = ADP + phosphate + cellular proteinSide 2.. Functionally, part of the Sec protein translocase complex. Interacts with the SecYEG preprotein conducting channel. Has a central role in coupling the hydrolysis of ATP to the transfer of proteins into and across the cell membrane, serving as an ATP-driven molecular motor driving the stepwise translocation of polypeptide chains across the membrane. The polypeptide is Protein translocase subunit SecA 2 (Staphylococcus epidermidis (strain ATCC 12228 / FDA PCI 1200)).